The primary structure comprises 509 residues: MDIRAAEISAILKEQIKNFGQEAEVTEVGQVLSVGDGIARVYGLDNVQAGEMVEFESGVRGMALNLEQDNVGVVIFGVDRDIKEGQTVKRTGAIVDVPVGKGLLGRVVDALGNPIDGKGPIVSTERRRVDVKAPGIIPRKSVHEPMATGLKSVDALIPIGRGQRELIIGDRQTGKTAIALDTILNQKPAHEGTDEKAKLYCVYVAVGQKRSTVAQFVKVLEDNGALDYSIVIAATASDPAPMQFLAPFSGCAMGEFFRDNGMHAVIIYDDLSKQAVAYRQMSLLLRRPPGREAYPGDVFYLHSRLLERAAKMGDAAGAGSLTALPVIETQANDVSAYIPTNVISITDGQIFLETDLFYQGVRPAVNVGLSVSRVGSAAQTKAMKKVAGKIKGELAQYREMAAFAQFGSDLDAATQRLLNRGSRLTELLKQPQFSPLKMEEQVAVIYAGVNGYLDAIPVNRVRAFEDGLLSTLRGRHADLLETIRTSKDLGDDAAAKLKGVVESFAKSFS.

Position 169–176 (169–176) interacts with ATP; that stretch reads GDRQTGKT.

The protein belongs to the ATPase alpha/beta chains family. F-type ATPases have 2 components, CF(1) - the catalytic core - and CF(0) - the membrane proton channel. CF(1) has five subunits: alpha(3), beta(3), gamma(1), delta(1), epsilon(1). CF(0) has three main subunits: a(1), b(2) and c(9-12). The alpha and beta chains form an alternating ring which encloses part of the gamma chain. CF(1) is attached to CF(0) by a central stalk formed by the gamma and epsilon chains, while a peripheral stalk is formed by the delta and b chains.

The protein localises to the cell inner membrane. The catalysed reaction is ATP + H2O + 4 H(+)(in) = ADP + phosphate + 5 H(+)(out). In terms of biological role, produces ATP from ADP in the presence of a proton gradient across the membrane. The alpha chain is a regulatory subunit. The polypeptide is ATP synthase subunit alpha (Methylobacterium sp. (strain 4-46)).